The following is a 198-amino-acid chain: FMN-dependent NADH:quinone oxidoreductase (198 aa).

FMN is bound by residues 92-95 (MWNL) and 136-139 (SRGG).

The protein belongs to the azoreductase type 1 family. Homodimer. Requires FMN as cofactor.

It catalyses the reaction 2 a quinone + NADH + H(+) = 2 a 1,4-benzosemiquinone + NAD(+). The catalysed reaction is N,N-dimethyl-1,4-phenylenediamine + anthranilate + 2 NAD(+) = 2-(4-dimethylaminophenyl)diazenylbenzoate + 2 NADH + 2 H(+). In terms of biological role, quinone reductase that provides resistance to thiol-specific stress caused by electrophilic quinones. Functionally, also exhibits azoreductase activity. Catalyzes the reductive cleavage of the azo bond in aromatic azo compounds to the corresponding amines. The chain is FMN-dependent NADH:quinone oxidoreductase from Clostridium perfringens (strain SM101 / Type A).